A 440-amino-acid polypeptide reads, in one-letter code: Phosphatidylcholine-sterol acyltransferase (440 aa).

Positions 1–24 (MGLPGSPWQWVLLLLGLLLPPATS) are cleaved as a signal peptide. Residue Asn44 is glycosylated (N-linked (GlcNAc...) asparagine). A disulfide bridge connects residues Cys74 and Cys98. An N-linked (GlcNAc...) asparagine glycan is attached at Asn108. The Nucleophile role is filled by Ser205. Residue Asn296 is glycosylated (N-linked (GlcNAc...) asparagine). Cys337 and Cys380 form a disulfide bridge. Asp369 functions as the Charge relay system in the catalytic mechanism. Asn397 carries N-linked (GlcNAc...) asparagine glycosylation. His401 functions as the Charge relay system in the catalytic mechanism. N-linked (GlcNAc...) asparagine glycosylation occurs at Asn408.

The protein belongs to the AB hydrolase superfamily. Lipase family. Detected in blood plasma (at protein level).

It is found in the secreted. It carries out the reaction a sterol + a 1,2-diacyl-sn-glycero-3-phosphocholine = a sterol ester + a 1-acyl-sn-glycero-3-phosphocholine. The enzyme catalyses a 1-O-alkyl-2-acetyl-sn-glycero-3-phosphocholine + H2O = a 1-O-alkyl-sn-glycero-3-phosphocholine + acetate + H(+). It catalyses the reaction 1-hexadecanoyl-2-(9Z,12Z-octadecadienoyl)-sn-glycero-3-phosphocholine + H2O = (9Z,12Z)-octadecadienoate + 1-hexadecanoyl-sn-glycero-3-phosphocholine + H(+). The catalysed reaction is 1-hexadecanoyl-2-(5Z,8Z,11Z,14Z-eicosatetraenoyl)-sn-glycero-3-phosphocholine + H2O = 1-hexadecanoyl-sn-glycero-3-phosphocholine + (5Z,8Z,11Z,14Z)-eicosatetraenoate + H(+). It carries out the reaction 1-hexadecanoyl-2-(5Z,8Z,11Z,14Z-eicosatetraenoyl)-sn-glycero-3-phosphocholine + cholesterol = cholesteryl (5Z,8Z,11Z,14Z)-eicosatetraenoate + 1-hexadecanoyl-sn-glycero-3-phosphocholine. The enzyme catalyses 1-hexadecanoyl-2-(9Z-octadecenoyl)-sn-glycero-3-phosphocholine + cholesterol = cholesteryl (9Z-octadecenoate) + 1-hexadecanoyl-sn-glycero-3-phosphocholine. It catalyses the reaction a 1-hexadecanoyl-2-acyl-sn-glycero-3-phosphocholine + (24S)-hydroxycholesterol = (24S)-24-hydroxycholesterol ester + 1-hexadecanoyl-sn-glycero-3-phosphocholine. The catalysed reaction is (24S)-hydroxycholesterol + 1-hexadecanoyl-2-(9Z,12Z-octadecadienoyl)-sn-glycero-3-phosphocholine = (24S)-hydroxycholesterol 3-linoleoate + 1-hexadecanoyl-sn-glycero-3-phosphocholine. It carries out the reaction 1-hexadecanoyl-2-(8Z,11Z,14Z-eicosatrienoyl)-sn-glycero-3-phosphocholine + cholesterol = cholesteryl (8Z,11Z,14Z)-eicosatrienoate + 1-hexadecanoyl-sn-glycero-3-phosphocholine. The enzyme catalyses 1-hexadecanoyl-2-(5Z,8Z,11Z-eicosatrienoyl)-sn-glycero-3-phosphocholine + cholesterol = cholesteryl (5Z,8Z,11Z)-eicosatrienoate + 1-hexadecanoyl-sn-glycero-3-phosphocholine. It catalyses the reaction 1-hexadecanoyl-2-(5Z,8Z,11Z,14Z,17Z-eicosapentaenoyl)-sn-glycero-3-phosphocholine + cholesterol = (5Z,8Z,11Z,14Z,17Z-eicosapentaenoyl)-cholesterol + 1-hexadecanoyl-sn-glycero-3-phosphocholine. The catalysed reaction is 1-hexadecanoyl-2-(9Z,12Z-octadecadienoyl)-sn-glycero-3-phosphocholine + cholesterol = cholesteryl (9Z,12Z)-octadecadienoate + 1-hexadecanoyl-sn-glycero-3-phosphocholine. It carries out the reaction 1-hexadecanoyl-2-(6Z,9Z,12Z-octadecatrienoyl)-sn-glycero-3-phosphocholine + cholesterol = (6Z,9Z,12Z-octadecatrienoyl)-cholesterol + 1-hexadecanoyl-sn-glycero-3-phosphocholine. The enzyme catalyses 1-hexadecanoyl-2-(11Z,14Z,17Z-eicosatrienoyl)-sn-glycero-3-phosphocholine + cholesterol = (11Z,14Z,17Z-eicosatrienoyl)-cholesterol + 1-hexadecanoyl-sn-glycero-3-phosphocholine. It catalyses the reaction 1-hexadecanoyl-2-(9Z,12Z,15Z-octadecatrienoyl)-sn-glycero-3-phosphocholine + cholesterol = (9Z,12Z,15Z-octadecatrienoyl)-cholesterol + 1-hexadecanoyl-sn-glycero-3-phosphocholine. The catalysed reaction is a 1-O-alkyl-2-acetyl-sn-glycero-3-phosphocholine + 1-hexadecanoyl-sn-glycero-3-phosphocholine = 1-hexadecanoyl-2-acetyl-sn-glycero-3-phosphocholine + a 1-O-alkyl-sn-glycero-3-phosphocholine. Functionally, central enzyme in the extracellular metabolism of plasma lipoproteins. Synthesized mainly in the liver and secreted into plasma where it converts cholesterol and phosphatidylcholines (lecithins) to cholesteryl esters and lysophosphatidylcholines on the surface of high and low density lipoproteins (HDLs and LDLs). The cholesterol ester is then transported back to the liver. Also produced in the brain by primary astrocytes, and esterifies free cholesterol on nascent APOE-containing lipoproteins secreted from glia and influences cerebral spinal fluid (CSF) APOE- and APOA1 levels. Together with APOE and the cholesterol transporter ABCA1, plays a key role in the maturation of glial-derived, nascent lipoproteins. Required for remodeling high-density lipoprotein particles into their spherical forms. Has a preference for plasma 16:0-18:2 or 18:O-18:2 phosphatidylcholines. Catalyzes the hydrolysis of 1-O-alkyl-2-acetyl-sn-glycero-3-phosphocholine (platelet-activating factor or PAF) to 1-O-alkyl-sn-glycero-3-phosphocholine (lyso-PAF). Also catalyzes the transfer of the acetate group from PAF to 1-hexadecanoyl-sn-glycero-3-phosphocholine forming lyso-PAF. Catalyzes the esterification of (24S)-hydroxycholesterol (24(S)OH-C), also known as cerebrosterol to produce 24(S)OH-C monoesters. This chain is Phosphatidylcholine-sterol acyltransferase (Lcat), found in Rattus norvegicus (Rat).